Here is a 364-residue protein sequence, read N- to C-terminus: Probable mannose-1-phosphate guanylyltransferase 2 (364 aa).

Residues L6 and V7 each coordinate GDP-alpha-D-mannose. G9, G11, T12, R13, and K23 together coordinate diphosphate. GDP-alpha-D-mannose contacts are provided by G88, N112, D114, G149, and N176.

This sequence belongs to the transferase hexapeptide repeat family.

It carries out the reaction alpha-D-mannose 1-phosphate + GTP + H(+) = GDP-alpha-D-mannose + diphosphate. Its pathway is nucleotide-sugar biosynthesis; GDP-alpha-D-mannose biosynthesis; GDP-alpha-D-mannose from alpha-D-mannose 1-phosphate (GTP route): step 1/1. Functionally, catalyzes a reaction of the Smirnoff-Wheeler pathway, the major route to ascorbate biosynthesis in plants. The polypeptide is Probable mannose-1-phosphate guanylyltransferase 2 (Arabidopsis thaliana (Mouse-ear cress)).